The following is a 110-amino-acid chain: U1-lycotoxin-Ls1jj (110 aa).

Residues 1 to 20 (MKFVLLFGVLLVTLFSYSSA) form the signal peptide. A propeptide spanning residues 21-44 (EMLDDFDQADEDELLSLIEKEEAR) is cleaved from the precursor. Intrachain disulfides connect Cys-47/Cys-62, Cys-54/Cys-71, Cys-61/Cys-89, and Cys-73/Cys-87.

It belongs to the neurotoxin 19 (CSTX) family. 03 subfamily. As to expression, expressed by the venom gland.

It is found in the secreted. The sequence is that of U1-lycotoxin-Ls1jj from Lycosa singoriensis (Wolf spider).